Reading from the N-terminus, the 156-residue chain is SCP2 sterol-binding domain-containing protein 1 (156 aa).

In terms of domain architecture, SCP2 spans 44–156 (NFSVFEDISQ…ERIFREWAKI (113 aa)).

The sequence is that of SCP2 sterol-binding domain-containing protein 1 (Scp2d1) from Mus musculus (Mouse).